We begin with the raw amino-acid sequence, 513 residues long: ATP synthase subunit alpha (513 aa).

169 to 176 (GDRQTGKT) contributes to the ATP binding site.

The protein belongs to the ATPase alpha/beta chains family. F-type ATPases have 2 components, CF(1) - the catalytic core - and CF(0) - the membrane proton channel. CF(1) has five subunits: alpha(3), beta(3), gamma(1), delta(1), epsilon(1). CF(0) has three main subunits: a(1), b(2) and c(9-12). The alpha and beta chains form an alternating ring which encloses part of the gamma chain. CF(1) is attached to CF(0) by a central stalk formed by the gamma and epsilon chains, while a peripheral stalk is formed by the delta and b chains.

The protein localises to the cell inner membrane. The catalysed reaction is ATP + H2O + 4 H(+)(in) = ADP + phosphate + 5 H(+)(out). Its function is as follows. Produces ATP from ADP in the presence of a proton gradient across the membrane. The alpha chain is a regulatory subunit. The polypeptide is ATP synthase subunit alpha (Vibrio vulnificus (strain CMCP6)).